The following is a 594-amino-acid chain: Potassium-transporting ATPase potassium-binding subunit (594 aa).

Transmembrane regions (helical) follow at residues 4–24 (QFFG…PFLG), 65–85 (QYAV…YALQ), 136–156 (ALTV…FALI), 179–199 (LYVL…QGVI), 287–307 (LEML…GEMV), 314–334 (VAIL…TQNA), 361–381 (FGVA…CGAV), 390–410 (AMGG…FGGV), 413–433 (GLYG…LMIG), 450–470 (MVSI…ALAV), 518–538 (LLGL…LALA), and 560–580 (LFIV…YVPA).

This sequence belongs to the KdpA family. In terms of assembly, the system is composed of three essential subunits: KdpA, KdpB and KdpC.

It is found in the cell inner membrane. In terms of biological role, part of the high-affinity ATP-driven potassium transport (or Kdp) system, which catalyzes the hydrolysis of ATP coupled with the electrogenic transport of potassium into the cytoplasm. This subunit binds the periplasmic potassium ions and delivers the ions to the membrane domain of KdpB through an intramembrane tunnel. This Bordetella avium (strain 197N) protein is Potassium-transporting ATPase potassium-binding subunit.